Here is a 120-residue protein sequence, read N- to C-terminus: Superoxide dismutase [Cu-Zn] (120 aa).

Cu cation is bound by residues H11, H13, and H28. Residues 16-52 (GDTTNGCMSTGPHFNPTGKEHGAPQDENRHAGDLGNI) are disordered. C22 and C112 are disulfide-bonded. 4 residues coordinate Zn(2+): H28, H36, H45, and D48. Basic and acidic residues predominate over residues 33-47 (GKEHGAPQDENRHAG). Position 85 (H85) interacts with Cu cation.

The protein belongs to the Cu-Zn superoxide dismutase family. Homodimer. Requires Cu cation as cofactor. It depends on Zn(2+) as a cofactor.

The protein resides in the cytoplasm. It carries out the reaction 2 superoxide + 2 H(+) = H2O2 + O2. In terms of biological role, destroys radicals which are normally produced within the cells and which are toxic to biological systems. This chain is Superoxide dismutase [Cu-Zn] (sodC), found in Aspergillus japonicus.